The primary structure comprises 257 residues: Transcription factor MYB3 (257 aa).

HTH myb-type domains are found at residues 9 to 61 (KAHM…MNYL) and 62 to 116 (RPDL…KRKL). DNA-binding regions (H-T-H motif) lie at residues 37–61 (WRSL…MNYL) and 89–112 (WSLI…NTHI). Residues 189 to 193 (LNLEL) carry the Required for interaction with CPL1 motif.

In terms of assembly, interacts with CPL1. In terms of tissue distribution, expressed in roots, stems, leaves, flowers and siliques.

The protein resides in the nucleus. In Arabidopsis thaliana (Mouse-ear cress), this protein is Transcription factor MYB3 (MYB3).